Consider the following 321-residue polypeptide: Holliday junction branch migration complex subunit RuvB (321 aa).

Residues 1–173 (MMMEQECVDD…FGIISRLEFY (173 aa)) are large ATPase domain (RuvB-L). Residues Ile12, Arg13, Gly54, Lys57, Thr58, Thr59, 120 to 122 (EDF), Arg163, Tyr173, and Arg210 contribute to the ATP site. Thr58 contributes to the Mg(2+) binding site. The tract at residues 174–244 (TPAELACIVK…LASDALARMD (71 aa)) is small ATPAse domain (RuvB-S). The tract at residues 247–321 (ELGLDQMDRK…KAYRHMNLLA (75 aa)) is head domain (RuvB-H). 2 residues coordinate DNA: Arg302 and Arg307.

Belongs to the RuvB family. In terms of assembly, homohexamer. Forms an RuvA(8)-RuvB(12)-Holliday junction (HJ) complex. HJ DNA is sandwiched between 2 RuvA tetramers; dsDNA enters through RuvA and exits via RuvB. An RuvB hexamer assembles on each DNA strand where it exits the tetramer. Each RuvB hexamer is contacted by two RuvA subunits (via domain III) on 2 adjacent RuvB subunits; this complex drives branch migration. In the full resolvosome a probable DNA-RuvA(4)-RuvB(12)-RuvC(2) complex forms which resolves the HJ.

It localises to the cytoplasm. It carries out the reaction ATP + H2O = ADP + phosphate + H(+). Its function is as follows. The RuvA-RuvB-RuvC complex processes Holliday junction (HJ) DNA during genetic recombination and DNA repair, while the RuvA-RuvB complex plays an important role in the rescue of blocked DNA replication forks via replication fork reversal (RFR). RuvA specifically binds to HJ cruciform DNA, conferring on it an open structure. The RuvB hexamer acts as an ATP-dependent pump, pulling dsDNA into and through the RuvAB complex. RuvB forms 2 homohexamers on either side of HJ DNA bound by 1 or 2 RuvA tetramers; 4 subunits per hexamer contact DNA at a time. Coordinated motions by a converter formed by DNA-disengaged RuvB subunits stimulates ATP hydrolysis and nucleotide exchange. Immobilization of the converter enables RuvB to convert the ATP-contained energy into a lever motion, pulling 2 nucleotides of DNA out of the RuvA tetramer per ATP hydrolyzed, thus driving DNA branch migration. The RuvB motors rotate together with the DNA substrate, which together with the progressing nucleotide cycle form the mechanistic basis for DNA recombination by continuous HJ branch migration. Branch migration allows RuvC to scan DNA until it finds its consensus sequence, where it cleaves and resolves cruciform DNA. The polypeptide is Holliday junction branch migration complex subunit RuvB (Oleidesulfovibrio alaskensis (strain ATCC BAA-1058 / DSM 17464 / G20) (Desulfovibrio alaskensis)).